The primary structure comprises 230 residues: MFRPLLSLCLALLVSAPAHADNIQTFRAAKQDLNKLYQSHPVTFYCGCNIKFSGKKMAPDWESCGYLPGKQAERASRIEWEHVVPAWEFGHQLQCWQDGGRKNCGKSDEFNRMEGDMHNLFPAIGEVNGDRANFRFSDWNGKPNQYGKCQMLVDFKERQVQPPKGPVRGQIARAYLYMSQQYGLRLAAQQRKLYEAWDRQYPADRWECERNRRIGKLQGNTNPFIEKQCQ.

An N-terminal signal peptide occupies residues 1–20 (MFRPLLSLCLALLVSAPAHA).

Belongs to the EndA/NucM nuclease family.

Its subcellular location is the secreted. The protein is Extracellular deoxyribonuclease (dns) of Aeromonas hydrophila.